A 382-amino-acid chain; its full sequence is Guanine nucleotide exchange factor for Rab-3A (382 aa).

A compositionally biased stretch (pro residues) spans 1 to 17 (MWSGPPQPDQGLPPPLA). The tract at residues 1-60 (MWSGPPQPDQGLPPPLAAVPVPWKSTDPCQGHRESPGALVETSAGEEAQGQEGPAAAQLD) is disordered. Residues 45-58 (GEEAQGQEGPAAAQ) are compositionally biased toward low complexity. Positions 73 to 161 (EKGSEFLKEE…AEVTALKTLV (89 aa)) form a coiled coil. A disordered region spans residues 166–198 (PASPNRELHPQLLSPTKAGPRKGHSRHKSTSST). 2 positions are modified to phosphoserine: Ser-168 and Ser-179. The span at 184–194 (GPRKGHSRHKS) shows a compositional bias: basic residues.

It belongs to the SEC2 family. In terms of assembly, interacts with RAB3A and IHPK1 through the coiled-coil domain. This interaction is competitive. IHPK1 kinase activity is not required for this interaction.

Guanine nucleotide exchange factor (GEF) which may activate RAB3A, a GTPase that regulates synaptic vesicle exocytosis. Promotes the exchange of GDP to GTP, converting inactive GDP-bound Rab proteins into their active GTP-bound form. May also activate RAB8A and RAB8B. This is Guanine nucleotide exchange factor for Rab-3A (RAB3IL1) from Homo sapiens (Human).